The following is a 264-amino-acid chain: PDZ domain-containing protein 9 (264 aa).

Positions 22–109 (VHNLSKTQQT…GTVLQIKVYR (88 aa)) constitute a PDZ domain.

The protein is PDZ domain-containing protein 9 (PDZD9) of Macaca fascicularis (Crab-eating macaque).